A 155-amino-acid polypeptide reads, in one-letter code: DNA gyrase inhibitor (155 aa).

The protein belongs to the DNA gyrase inhibitor family. In terms of assembly, interacts with DNA gyrase.

The protein localises to the cytoplasm. Functionally, inhibits the supercoiling activity of DNA gyrase. Acts by inhibiting DNA gyrase at an early step, prior to (or at the step of) binding of DNA by the gyrase. It protects cells against toxins that target DNA gyrase, by inhibiting activity of these toxins and reducing the formation of lethal double-strand breaks in the cell. The chain is DNA gyrase inhibitor from Erwinia billingiae (strain Eb661).